Here is a 330-residue protein sequence, read N- to C-terminus: Succinylglutamate desuccinylase (330 aa).

Zn(2+) contacts are provided by H53, E56, and H147. The active site involves E210.

Belongs to the AspA/AstE family. Succinylglutamate desuccinylase subfamily. Requires Zn(2+) as cofactor.

It carries out the reaction N-succinyl-L-glutamate + H2O = L-glutamate + succinate. Its pathway is amino-acid degradation; L-arginine degradation via AST pathway; L-glutamate and succinate from L-arginine: step 5/5. Functionally, transforms N(2)-succinylglutamate into succinate and glutamate. The sequence is that of Succinylglutamate desuccinylase from Yersinia pseudotuberculosis serotype O:3 (strain YPIII).